Consider the following 232-residue polypeptide: GTP cyclohydrolase III (232 aa).

Belongs to the archaeal-type GTP cyclohydrolase family.

The enzyme catalyses GTP + 3 H2O = 2-amino-5-formylamino-6-(5-phospho-D-ribosylamino)pyrimidin-4(3H)-one + 2 phosphate + 2 H(+). Functionally, catalyzes the formation of 2-amino-5-formylamino-6-ribofuranosylamino-4(3H)-pyrimidinone ribonucleotide monophosphate and inorganic phosphate from GTP. Also has an independent pyrophosphate phosphohydrolase activity. This chain is GTP cyclohydrolase III, found in Saccharolobus islandicus (strain Y.N.15.51 / Yellowstone #2) (Sulfolobus islandicus).